A 395-amino-acid chain; its full sequence is ATP phosphoribosyltransferase regulatory subunit (395 aa).

Belongs to the class-II aminoacyl-tRNA synthetase family. HisZ subfamily. In terms of assembly, heteromultimer composed of HisG and HisZ subunits.

It is found in the cytoplasm. It functions in the pathway amino-acid biosynthesis; L-histidine biosynthesis; L-histidine from 5-phospho-alpha-D-ribose 1-diphosphate: step 1/9. In terms of biological role, required for the first step of histidine biosynthesis. May allow the feedback regulation of ATP phosphoribosyltransferase activity by histidine. The protein is ATP phosphoribosyltransferase regulatory subunit of Pseudomonas fluorescens (strain ATCC BAA-477 / NRRL B-23932 / Pf-5).